The primary structure comprises 203 residues: CASP-like protein 2U2 (203 aa).

The disordered stretch occupies residues 1–21 (MGGFVDDGAAGLAPSHGSSRA). The Cytoplasmic segment spans residues 1 to 27 (MGGFVDDGAAGLAPSHGSSRAGRGLEG). The chain crosses the membrane as a helical span at residues 28–48 (AGVFLRFVASLLSIAGLMLLV). The Extracellular portion of the chain corresponds to 49 to 73 (KDNQTVQQMVATEAVTLETKYSDIS). N-linked (GlcNAc...) asparagine glycosylation occurs at asparagine 51. Residues 74-94 (AFVFLLYTNGLVAVYCFFLAL) traverse the membrane as a helical segment. The Cytoplasmic segment spans residues 95–108 (ASVFSLIASARSGK). Residues 109-129 (LAGWVTFVLDQGLAYVLLAAA) form a helical membrane-spanning segment. The Extracellular portion of the chain corresponds to 130-163 (AASTEVLYLAENGDLKTSWAEICSQFGHFCHMAR). A helical transmembrane segment spans residues 164–184 (ASIVVSFLSMLAMAVLSVMSA). The Cytoplasmic segment spans residues 185-203 (QQLFSKYRRPMTAKTAQDI).

It belongs to the Casparian strip membrane proteins (CASP) family. As to quaternary structure, homodimer and heterodimers.

The protein resides in the cell membrane. The polypeptide is CASP-like protein 2U2 (Osmunda lancea (Fern)).